Reading from the N-terminus, the 285-residue chain is Probable adenylate kinase 6, chloroplastic (285 aa).

The N-terminal 33 residues, methionine 1–arginine 33, are a transit peptide targeting the chloroplast. Position 63 to 68 (glycine 63 to threonine 68) interacts with ATP. The NMP stretch occupies residues alanine 83–valine 112. AMP is bound by residues threonine 84, arginine 89, lysine 110 to valine 112, glycine 140 to arginine 143, and glutamine 147. The interval glycine 176–aspartate 224 is LID. ATP is bound by residues arginine 177 and asparagine 186 to phenylalanine 187. Residues arginine 221 and arginine 232 each coordinate AMP.

It belongs to the adenylate kinase family.

The protein resides in the plastid. It is found in the chloroplast. The catalysed reaction is AMP + ATP = 2 ADP. In terms of biological role, catalyzes the reversible transfer of the terminal phosphate group between ATP and AMP. Plays an important role in cellular energy homeostasis and in adenine nucleotide metabolism. This Oryza sativa subsp. japonica (Rice) protein is Probable adenylate kinase 6, chloroplastic.